The chain runs to 359 residues: DNA replication and repair protein RecF (359 aa).

An ATP-binding site is contributed by 30–37 (GPNGSGKT).

It belongs to the RecF family.

It localises to the cytoplasm. Functionally, the RecF protein is involved in DNA metabolism; it is required for DNA replication and normal SOS inducibility. RecF binds preferentially to single-stranded, linear DNA. It also seems to bind ATP. The sequence is that of DNA replication and repair protein RecF from Psychromonas ingrahamii (strain DSM 17664 / CCUG 51855 / 37).